The primary structure comprises 336 residues: Dihydroorotate dehydrogenase (quinone) (336 aa).

FMN-binding positions include 62–66 (AGLDK) and threonine 86. Lysine 66 serves as a coordination point for substrate. 111–115 (NRMGF) is a substrate binding site. FMN contacts are provided by asparagine 139 and asparagine 172. Asparagine 172 provides a ligand contact to substrate. The active-site Nucleophile is serine 175. Residue asparagine 177 participates in substrate binding. FMN is bound by residues lysine 217 and threonine 245. Residue 246–247 (NT) coordinates substrate. FMN-binding positions include glycine 268, glycine 297, and 318–319 (YS).

Belongs to the dihydroorotate dehydrogenase family. Type 2 subfamily. As to quaternary structure, monomer. Requires FMN as cofactor.

It localises to the cell membrane. It carries out the reaction (S)-dihydroorotate + a quinone = orotate + a quinol. Its pathway is pyrimidine metabolism; UMP biosynthesis via de novo pathway; orotate from (S)-dihydroorotate (quinone route): step 1/1. Functionally, catalyzes the conversion of dihydroorotate to orotate with quinone as electron acceptor. The protein is Dihydroorotate dehydrogenase (quinone) of Yersinia pseudotuberculosis serotype O:1b (strain IP 31758).